A 360-amino-acid polypeptide reads, in one-letter code: MAGNSIGQLFKVTTFGESHGIALGCIVDGVPPNMALSEADIQPDLDRRKPGTSRYTTPRREDDEVQILSGVFEGKTTGTSIGLIIKNADQRSKDYGDIADKFRPGHADYTYQQKYGIRDYRGGGRSSARETAMRVAAGAIAKKYLREQFGIEVRGYLSQIGNVKINPETVADISKIDWQQVASNPFFCPDPVAVEGFDELIRELKKDGDSIGAKLTVVAENVPVGLGEPVFDRLDADLAHALMSINAVKAVEIGDGFDVVEQRGSEHRDEMTPQGFVSNHAGGILGGISSGQPIIAHIALKPTSSIMVPGRSVNLNNEQVELITKGRHDPCVGIRAVPIAEAMTAIILLDHLLRFKAQCR.

NADP(+) contacts are provided by Arg48 and Arg54. Residues 125-127 (RSS), 246-247 (NA), Gly286, 301-305 (KPTSS), and Arg327 each bind FMN.

The protein belongs to the chorismate synthase family. Homotetramer. It depends on FMNH2 as a cofactor.

It carries out the reaction 5-O-(1-carboxyvinyl)-3-phosphoshikimate = chorismate + phosphate. The protein operates within metabolic intermediate biosynthesis; chorismate biosynthesis; chorismate from D-erythrose 4-phosphate and phosphoenolpyruvate: step 7/7. Its function is as follows. Catalyzes the anti-1,4-elimination of the C-3 phosphate and the C-6 proR hydrogen from 5-enolpyruvylshikimate-3-phosphate (EPSP) to yield chorismate, which is the branch point compound that serves as the starting substrate for the three terminal pathways of aromatic amino acid biosynthesis. This reaction introduces a second double bond into the aromatic ring system. The sequence is that of Chorismate synthase from Actinobacillus pleuropneumoniae serotype 7 (strain AP76).